The primary structure comprises 326 residues: Probable protein phosphatase 2C 61 (326 aa).

The 275-residue stretch at 42 to 316 (LGSVSSLAGG…DDISVVCLSL (275 aa)) folds into the PPM-type phosphatase domain. 4 residues coordinate Mn(2+): Asp77, Gly78, Asp261, and Asp307.

Belongs to the PP2C family. Mg(2+) is required as a cofactor. Mn(2+) serves as cofactor.

The catalysed reaction is O-phospho-L-seryl-[protein] + H2O = L-seryl-[protein] + phosphate. It carries out the reaction O-phospho-L-threonyl-[protein] + H2O = L-threonyl-[protein] + phosphate. The sequence is that of Probable protein phosphatase 2C 61 from Arabidopsis thaliana (Mouse-ear cress).